Here is a 379-residue protein sequence, read N- to C-terminus: Homoserine O-succinyltransferase (379 aa).

The AB hydrolase-1 domain maps to 51 to 360 (NAVLICHALS…DAPQGHDAFL (310 aa)). Ser157 functions as the Nucleophile in the catalytic mechanism. Position 227 (Arg227) interacts with substrate. Catalysis depends on residues Asp323 and His356. Asp357 lines the substrate pocket.

The protein belongs to the AB hydrolase superfamily. MetX family. In terms of assembly, homodimer.

It localises to the cytoplasm. It catalyses the reaction L-homoserine + succinyl-CoA = O-succinyl-L-homoserine + CoA. It functions in the pathway amino-acid biosynthesis; L-methionine biosynthesis via de novo pathway; O-succinyl-L-homoserine from L-homoserine: step 1/1. In terms of biological role, transfers a succinyl group from succinyl-CoA to L-homoserine, forming succinyl-L-homoserine. The polypeptide is Homoserine O-succinyltransferase (Pseudomonas fluorescens (strain SBW25)).